Here is a 330-residue protein sequence, read N- to C-terminus: Cathepsin K (330 aa).

The first 16 residues, 1-16 (MWGLEVLLLLPMASFA), serve as a signal peptide directing secretion. Residues 17-115 (LYPEEILDTQ…TLYIPDWESR (99 aa)) constitute a propeptide, activation peptide. Residue Asn104 is glycosylated (N-linked (GlcNAc...) asparagine). Disulfide bonds link Cys137–Cys178, Cys171–Cys211, and Cys270–Cys319. Cys140 is a catalytic residue. Catalysis depends on residues His277 and Asn297.

Belongs to the peptidase C1 family.

Its subcellular location is the lysosome. It localises to the secreted. It is found in the apical cell membrane. The enzyme catalyses Broad proteolytic activity. With small-molecule substrates and inhibitors, the major determinant of specificity is P2, which is preferably Leu, Met &gt; Phe, and not Arg.. Its function is as follows. Thiol protease involved in osteoclastic bone resorption and may participate partially in the disorder of bone remodeling. Displays potent endoprotease activity against fibrinogen at acid pH. May play an important role in extracellular matrix degradation. Involved in the release of thyroid hormone thyroxine (T4) by limited proteolysis of TG/thyroglobulin in the thyroid follicle lumen. In Canis lupus familiaris (Dog), this protein is Cathepsin K (CTSK).